A 244-amino-acid polypeptide reads, in one-letter code: tRNA (guanine-N(7)-)-methyltransferase (244 aa).

Glu42, Asp67, Asp94, and Asp116 together coordinate S-adenosyl-L-methionine. The active site involves Asp116. Residues Lys120, Asp150, and 191–194 (TYYE) each bind substrate.

Belongs to the class I-like SAM-binding methyltransferase superfamily. TrmB family.

The catalysed reaction is guanosine(46) in tRNA + S-adenosyl-L-methionine = N(7)-methylguanosine(46) in tRNA + S-adenosyl-L-homocysteine. Its pathway is tRNA modification; N(7)-methylguanine-tRNA biosynthesis. Catalyzes the formation of N(7)-methylguanine at position 46 (m7G46) in tRNA. The chain is tRNA (guanine-N(7)-)-methyltransferase from Porphyromonas gingivalis (strain ATCC BAA-308 / W83).